The following is a 481-amino-acid chain: Glutamate-1-semialdehyde 2,1-aminomutase, chloroplastic (481 aa).

The tract at residues asparagine 18 to alanine 40 is disordered. The residue at position 321 (lysine 321) is an N6-(pyridoxal phosphate)lysine.

It belongs to the class-III pyridoxal-phosphate-dependent aminotransferase family. HemL subfamily. Homodimer. It depends on pyridoxal 5'-phosphate as a cofactor.

The protein resides in the plastid. It localises to the chloroplast. The enzyme catalyses (S)-4-amino-5-oxopentanoate = 5-aminolevulinate. It functions in the pathway porphyrin-containing compound metabolism; protoporphyrin-IX biosynthesis; 5-aminolevulinate from L-glutamyl-tRNA(Glu): step 2/2. It participates in porphyrin-containing compound metabolism; chlorophyll biosynthesis. This is Glutamate-1-semialdehyde 2,1-aminomutase, chloroplastic from Solanum lycopersicum (Tomato).